The sequence spans 507 residues: ATP synthase subunit alpha, chloroplastic (507 aa).

Position 170–177 (170–177) interacts with ATP; that stretch reads GDRQTGKT.

This sequence belongs to the ATPase alpha/beta chains family. As to quaternary structure, F-type ATPases have 2 components, CF(1) - the catalytic core - and CF(0) - the membrane proton channel. CF(1) has five subunits: alpha(3), beta(3), gamma(1), delta(1), epsilon(1). CF(0) has four main subunits: a, b, b' and c.

The protein resides in the plastid. Its subcellular location is the chloroplast thylakoid membrane. It catalyses the reaction ATP + H2O + 4 H(+)(in) = ADP + phosphate + 5 H(+)(out). Its function is as follows. Produces ATP from ADP in the presence of a proton gradient across the membrane. The alpha chain is a regulatory subunit. This is ATP synthase subunit alpha, chloroplastic from Nicotiana sylvestris (Wood tobacco).